The sequence spans 180 residues: UPF0227 protein Spro_1925 (180 aa).

It belongs to the UPF0227 family.

The polypeptide is UPF0227 protein Spro_1925 (Serratia proteamaculans (strain 568)).